A 539-amino-acid polypeptide reads, in one-letter code: Chaperonin GroEL (539 aa).

ATP contacts are provided by residues T29–P32, D86–T90, G413, D479–L481, and D495.

Belongs to the chaperonin (HSP60) family. As to quaternary structure, forms a cylinder of 14 subunits composed of two heptameric rings stacked back-to-back. Interacts with the co-chaperonin GroES.

The protein resides in the cytoplasm. The enzyme catalyses ATP + H2O + a folded polypeptide = ADP + phosphate + an unfolded polypeptide.. Together with its co-chaperonin GroES, plays an essential role in assisting protein folding. The GroEL-GroES system forms a nano-cage that allows encapsulation of the non-native substrate proteins and provides a physical environment optimized to promote and accelerate protein folding. The chain is Chaperonin GroEL from Pseudothermotoga lettingae (strain ATCC BAA-301 / DSM 14385 / NBRC 107922 / TMO) (Thermotoga lettingae).